The following is a 131-amino-acid chain: MSAKTDEILDSLKSLSLLEASELVKQIEEAFGVSAAASAGVVMAAPGAAAGGDGADAAEEKTEFEVVLESFEASSKIKVLKEVRNATGLGLGEAKALVEAAPKTIKEGATKEDAEALKKAIEAVGGKVTLK.

Belongs to the bacterial ribosomal protein bL12 family. In terms of assembly, homodimer. Part of the ribosomal stalk of the 50S ribosomal subunit. Forms a multimeric L10(L12)X complex, where L10 forms an elongated spine to which 2 to 4 L12 dimers bind in a sequential fashion. Binds GTP-bound translation factors.

In terms of biological role, forms part of the ribosomal stalk which helps the ribosome interact with GTP-bound translation factors. Is thus essential for accurate translation. The sequence is that of Large ribosomal subunit protein bL12 from Prochlorococcus marinus (strain NATL2A).